A 147-amino-acid chain; its full sequence is MKVIFLQDVKGQGKTGDVKDVADAYANNVLFKKKLARPATTGNLKQHEAHERKAAEEAKQALQDAQALKEKIEKETIIVSTKTGEGGRVFGSVTSKQIADELKQMGYKIDKRKIELEHPIKTLGVTKVPLKLHNEVTATLNVQVKEA.

Residues 40–60 (TTGNLKQHEAHERKAAEEAKQ) form a disordered region. Residues 45–59 (KQHEAHERKAAEEAK) show a composition bias toward basic and acidic residues.

The protein belongs to the bacterial ribosomal protein bL9 family.

Its function is as follows. Binds to the 23S rRNA. This Exiguobacterium sibiricum (strain DSM 17290 / CCUG 55495 / CIP 109462 / JCM 13490 / 255-15) protein is Large ribosomal subunit protein bL9.